We begin with the raw amino-acid sequence, 203 residues long: Urease accessory protein UreG (203 aa).

GTP is bound at residue 14–21 (GPVGSGKT).

Belongs to the SIMIBI class G3E GTPase family. UreG subfamily. In terms of assembly, homodimer. UreD, UreF and UreG form a complex that acts as a GTP-hydrolysis-dependent molecular chaperone, activating the urease apoprotein by helping to assemble the nickel containing metallocenter of UreC. The UreE protein probably delivers the nickel.

It is found in the cytoplasm. Its function is as follows. Facilitates the functional incorporation of the urease nickel metallocenter. This process requires GTP hydrolysis, probably effectuated by UreG. This chain is Urease accessory protein UreG, found in Sinorhizobium medicae (strain WSM419) (Ensifer medicae).